Consider the following 313-residue polypeptide: Ribosomal RNA small subunit methyltransferase H (313 aa).

S-adenosyl-L-methionine-binding positions include 34–36 (GGH), Asp55, Phe82, Asp103, and Gln110.

The protein belongs to the methyltransferase superfamily. RsmH family.

The protein localises to the cytoplasm. The enzyme catalyses cytidine(1402) in 16S rRNA + S-adenosyl-L-methionine = N(4)-methylcytidine(1402) in 16S rRNA + S-adenosyl-L-homocysteine + H(+). Its function is as follows. Specifically methylates the N4 position of cytidine in position 1402 (C1402) of 16S rRNA. This Pelobacter propionicus (strain DSM 2379 / NBRC 103807 / OttBd1) protein is Ribosomal RNA small subunit methyltransferase H.